The chain runs to 520 residues: GMP synthase [glutamine-hydrolyzing] (520 aa).

Residues 4–202 (KILILDFGSQ…VHDICGCGSD (199 aa)) form the Glutamine amidotransferase type-1 domain. The active-site Nucleophile is Cys-81. Residues His-176 and Glu-178 contribute to the active site. Residues 203–395 (WNMPDYVEEA…LGLPHDMVYR (193 aa)) enclose the GMPS ATP-PPase domain. Residue 230–236 (SGGVDSS) coordinates ATP.

As to quaternary structure, homodimer.

The enzyme catalyses XMP + L-glutamine + ATP + H2O = GMP + L-glutamate + AMP + diphosphate + 2 H(+). It functions in the pathway purine metabolism; GMP biosynthesis; GMP from XMP (L-Gln route): step 1/1. Catalyzes the synthesis of GMP from XMP. This Thiobacillus denitrificans (strain ATCC 25259 / T1) protein is GMP synthase [glutamine-hydrolyzing].